The sequence spans 216 residues: Thylakoid lumenal 16.5 kDa protein, chloroplastic (216 aa).

The N-terminal 38 residues, 1–38 (MAKSLLCSSTLNPFFSTTLSSSKKNQIAYSGNSKNQTS), are a transit peptide targeting the chloroplast. A thylakoid-targeting transit peptide spans 39-73 (SSLLWKRRELSLGFMSSLVAIGLVSNDRRRHDANA).

It localises to the plastid. The protein resides in the chloroplast thylakoid lumen. The polypeptide is Thylakoid lumenal 16.5 kDa protein, chloroplastic (Arabidopsis thaliana (Mouse-ear cress)).